Here is an 82-residue protein sequence, read N- to C-terminus: Small ribosomal subunit protein uS17 (82 aa).

This sequence belongs to the universal ribosomal protein uS17 family. In terms of assembly, part of the 30S ribosomal subunit.

In terms of biological role, one of the primary rRNA binding proteins, it binds specifically to the 5'-end of 16S ribosomal RNA. This is Small ribosomal subunit protein uS17 from Xanthobacter autotrophicus (strain ATCC BAA-1158 / Py2).